The sequence spans 323 residues: MIRSVVRGFGAALPKRVMTNKEIESRVDTSDEWIVQRTGIRQRYIAGEGETSASLGEAAARAALERAGLTPDDVDLIIVATSTPDNTFPATAVNIQNRLGMRHGAAFDMQAVCSGFVYAVATADAYIRGGLSKRALVIGAETFSRLLDWTDRTTCVLFGDGAGAIVLEAQEAAGTKADRGVLTAQLRSDGAHRDKLYVDGGPSTTGTVGHLRMEGREVFKHAVGMITDVIEAAFEATGTTADDIDWLVPHQANRRIIDGSAKKLGIPLEKVVVTVDLHGNTSAASIPLALDAAASDGRIKKGDLVMLEAMGGGFTWGSVLLRW.

Residues C113 and H250 contribute to the active site. An ACP-binding region spans residues Q251–R255. N280 is a catalytic residue.

It belongs to the thiolase-like superfamily. FabH family. Homodimer.

It localises to the cytoplasm. The catalysed reaction is malonyl-[ACP] + acetyl-CoA + H(+) = 3-oxobutanoyl-[ACP] + CO2 + CoA. Its pathway is lipid metabolism; fatty acid biosynthesis. Functionally, catalyzes the condensation reaction of fatty acid synthesis by the addition to an acyl acceptor of two carbons from malonyl-ACP. Catalyzes the first condensation reaction which initiates fatty acid synthesis and may therefore play a role in governing the total rate of fatty acid production. Possesses both acetoacetyl-ACP synthase and acetyl transacylase activities. Its substrate specificity determines the biosynthesis of branched-chain and/or straight-chain of fatty acids. The polypeptide is Beta-ketoacyl-[acyl-carrier-protein] synthase III (Rhizobium meliloti (strain 1021) (Ensifer meliloti)).